The primary structure comprises 440 residues: O-glycoside alpha-1,2-mannosyltransferase homolog 4 (440 aa).

Residues 1–35 (MLGWNKHVFFSESRINFRCLLRKKLKKRCPLSARF) lie on the Cytoplasmic side of the membrane. Residues 36-56 (VLVLLLIVLIFILKMGYKQLI) traverse the membrane as a helical; Signal-anchor for type II membrane protein segment. At 57-440 (YKLNHPPLRR…NLIGDGFLDE (384 aa)) the chain is on the lumenal side. Glutamate 336 serves as the catalytic Nucleophile.

Belongs to the glycosyltransferase 15 family.

It is found in the cytoplasm. The protein localises to the nucleus. The protein resides in the golgi apparatus membrane. In terms of biological role, probable mannosyltransferase involved in O-glycosylation of cell wall and secreted proteins. Transfers an alpha-D-mannosyl residue from GDP-mannose into lipid-linked oligosaccharide, forming an alpha-(1-&gt;2)-D-mannosyl-D-mannose linkage. The polypeptide is O-glycoside alpha-1,2-mannosyltransferase homolog 4 (omh4) (Schizosaccharomyces pombe (strain 972 / ATCC 24843) (Fission yeast)).